A 211-amino-acid chain; its full sequence is Uracil phosphoribosyltransferase (211 aa).

Residues Arg-79, Arg-104, and 131-139 (DPMLATGGS) contribute to the 5-phospho-alpha-D-ribose 1-diphosphate site. Residues Ile-196 and 201-203 (GDA) each bind uracil. Asp-202 lines the 5-phospho-alpha-D-ribose 1-diphosphate pocket.

The protein belongs to the UPRTase family. Mg(2+) is required as a cofactor.

It catalyses the reaction UMP + diphosphate = 5-phospho-alpha-D-ribose 1-diphosphate + uracil. The protein operates within pyrimidine metabolism; UMP biosynthesis via salvage pathway; UMP from uracil: step 1/1. With respect to regulation, allosterically activated by GTP. In terms of biological role, catalyzes the conversion of uracil and 5-phospho-alpha-D-ribose 1-diphosphate (PRPP) to UMP and diphosphate. The polypeptide is Uracil phosphoribosyltransferase (Lactococcus lactis subsp. cremoris (strain SK11)).